We begin with the raw amino-acid sequence, 170 residues long: uncharacterized protein (170 aa).

The protein localises to the mitochondrion. This is an uncharacterized protein from Arabidopsis thaliana (Mouse-ear cress).